We begin with the raw amino-acid sequence, 191 residues long: Calcium and integrin-binding protein 1 (191 aa).

The N-myristoyl glycine moiety is linked to residue glycine 2. EF-hand domains follow at residues 103–138 and 148–183; these read TPDI…LTGE and EMKQ…SPDF. Aspartate 116, aspartate 118, aspartate 120, threonine 122, aspartate 127, aspartate 161, aspartate 163, aspartate 165, threonine 167, and glutamate 172 together coordinate Ca(2+).

As to quaternary structure, monomer. Interacts with the heterodimeric integrin alpha-IIb/beta3 (ITGA2B-ITGB3). Interacts with ITGA2B (via cytoplasmic domain); the interaction is direct and calcium-dependent. Interacts with the protein kinases PLK2/SNK and PRKDC (via the region immediately upstream of the kinase domain). Interacts with PLK3; the interaction inhibits PLK3 kinase activity. Interacts with PSEN2. Interacts (via C-terminus) with F8. Interacts with NBR1 (via C-terminus). Interacts with FEZ1 (via C-terminus). Interacts with UBR5 (via C-terminus); the interaction is sensitive to DNA damage, and may target CIB1 for ubiquitin-mediated degradation. Interacts with IFI6; the interaction is direct. Interacts with BCL2. Interacts with ITPR3; the interaction occurs in a calcium dependent manner. Interacts with PTK2/FAK1. Interacts with MAP3K5; the interaction inhibits MAP3K5 activation by phosphorylation, and its subsequent interaction with TRAF2. Interacts (via C-terminal region) with STMN2 (via the N-terminal region); the interaction is direct, occurs in a calcium-dependent manner and attenuates the STMN2-induced neurite outgrowth inhibition. Interacts with SPHK1, the interaction occurs in a calcium-dependent manner. Interacts with ITGA2B (via C-terminal cytoplasmic tail); the interaction occurs upon platelet aggregation and is stabilized/increased in a calcium and magnesium-dependent manner. Interacts with PAK1 (via N-terminal region); the interaction is direct and occurs in a calcium-dependent manner. Interacts with RAC3 (via C-terminal region); the interaction induces their association with the cytoskeleton upon alpha-IIb/beta3 integrin-mediated adhesion. Interacts with ITGA5 and ITGAV. Interacts with MYO1C. Interacts with ITGA2B (via C-terminal cytoplasmic tail region). Interacts (via C-terminal region) with PPP3R1; the interaction increases upon cardiomyocytes hypertrophy. Interacts with CACNA1C; the interaction increases upon cardiomyocytes hypertrophy. Interacts with TAS1R2 (via C-terminus); this interaction is independent of the myristoylation state of CIB1. Interacts and forms a complex with TMC6 and TMC8; the interaction stabilizes each component of the complex.

The protein localises to the membrane. It is found in the cell membrane. It localises to the sarcolemma. The protein resides in the apical cell membrane. Its subcellular location is the cell projection. The protein localises to the ruffle membrane. It is found in the filopodium tip. It localises to the growth cone. The protein resides in the lamellipodium. Its subcellular location is the cytoplasm. The protein localises to the cytoskeleton. It is found in the microtubule organizing center. It localises to the centrosome. The protein resides in the perinuclear region. Its subcellular location is the nucleus. The protein localises to the neuron projection. It is found in the perikaryon. Its function is as follows. Calcium-binding protein that plays a role in the regulation of numerous cellular processes, such as cell differentiation, cell division, cell proliferation, cell migration, thrombosis, angiogenesis, cardiac hypertrophy and apoptosis. Involved in bone marrow megakaryocyte differentiation by negatively regulating thrombopoietin-mediated signaling pathway. Participates in the endomitotic cell cycle of megakaryocyte, a form of mitosis in which both karyokinesis and cytokinesis are interrupted. Plays a role in integrin signaling by negatively regulating alpha-IIb/beta3 activation in thrombin-stimulated megakaryocytes preventing platelet aggregation. Up-regulates PTK2/FAK1 activity, and is also needed for the recruitment of PTK2/FAK1 to focal adhesions; it thus appears to play an important role in focal adhesion formation. Positively regulates cell migration on fibronectin in a CDC42-dependent manner, the effect being negatively regulated by PAK1. Functions as a negative regulator of stress activated MAP kinase (MAPK) signaling pathways. Down-regulates inositol 1,4,5-trisphosphate receptor-dependent calcium signaling. Involved in sphingosine kinase SPHK1 translocation to the plasma membrane in a N-myristoylation-dependent manner preventing TNF-alpha-induced apoptosis. Regulates serine/threonine-protein kinase PLK3 activity for proper completion of cell division progression. Plays a role in microtubule (MT) dynamics during neuronal development; disrupts the MT depolymerization activity of STMN2 attenuating NGF-induced neurite outgrowth and the MT reorganization at the edge of lamellipodia. Promotes cardiomyocyte hypertrophy via activation of the calcineurin/NFAT signaling pathway. Stimulates calcineurin PPP3R1 activity by mediating its anchoring to the sarcolemma. In ischemia-induced (pathological or adaptive) angiogenesis, stimulates endothelial cell proliferation, migration and microvessel formation by activating the PAK1 and ERK1/ERK2 signaling pathway. Also promotes cancer cell survival and proliferation. May regulate cell cycle and differentiation of spermatogenic germ cells, and/or differentiation of supporting Sertoli cells. Forms a complex with TMC6/EVER1 and TMC8/EVER2 in lymphocytes and keratynocytes where CIB1 stabilizes TMC6 and TMC8 levels and reciprocally. This Bos taurus (Bovine) protein is Calcium and integrin-binding protein 1 (CIB1).